Here is a 618-residue protein sequence, read N- to C-terminus: Proline--tRNA ligase (618 aa).

This sequence belongs to the class-II aminoacyl-tRNA synthetase family. ProS type 1 subfamily. In terms of assembly, homodimer.

It is found in the cytoplasm. It catalyses the reaction tRNA(Pro) + L-proline + ATP = L-prolyl-tRNA(Pro) + AMP + diphosphate. In terms of biological role, catalyzes the attachment of proline to tRNA(Pro) in a two-step reaction: proline is first activated by ATP to form Pro-AMP and then transferred to the acceptor end of tRNA(Pro). As ProRS can inadvertently accommodate and process non-cognate amino acids such as alanine and cysteine, to avoid such errors it has two additional distinct editing activities against alanine. One activity is designated as 'pretransfer' editing and involves the tRNA(Pro)-independent hydrolysis of activated Ala-AMP. The other activity is designated 'posttransfer' editing and involves deacylation of mischarged Ala-tRNA(Pro). The misacylated Cys-tRNA(Pro) is not edited by ProRS. The polypeptide is Proline--tRNA ligase (Streptococcus pyogenes serotype M3 (strain ATCC BAA-595 / MGAS315)).